A 219-amino-acid polypeptide reads, in one-letter code: Uracil-DNA glycosylase (219 aa).

Asp-61 (proton acceptor) is an active-site residue.

It belongs to the uracil-DNA glycosylase (UDG) superfamily. UNG family.

Its subcellular location is the cytoplasm. It carries out the reaction Hydrolyzes single-stranded DNA or mismatched double-stranded DNA and polynucleotides, releasing free uracil.. In terms of biological role, excises uracil residues from the DNA which can arise as a result of misincorporation of dUMP residues by DNA polymerase or due to deamination of cytosine. This is Uracil-DNA glycosylase from Haemophilus influenzae (strain PittEE).